A 283-amino-acid chain; its full sequence is V-set domain containing T-cell activation inhibitor 1 (283 aa).

Positions 1 to 24 are cleaved as a signal peptide; the sequence is MASLGQIIFWSIINIIIILAGAIA. Ig-like V-type domains lie at 35–144 and 153–241; these read HFIT…ANLE and PEIN…IKVT. 2 disulfide bridges follow: cysteine 56–cysteine 130 and cysteine 168–cysteine 225. N-linked (GlcNAc...) asparagine glycosylation occurs at asparagine 216. Glycine 257 carries GPI-anchor amidated glycine lipidation. A propeptide spans 258 to 283 (removed in mature form); that stretch reads PSPCVFSSAFVAGWALLSLSCCLMLR.

The protein belongs to the immunoglobulin superfamily. BTN/MOG family. N-glycosylated. As to expression, expressed on the surface of professional antigen-presenting cells (at protein level). Widely expressed, including in kidney, liver, lung, pancreas, placenta, prostate, spleen, testis and thymus.

Its subcellular location is the cell membrane. Negatively regulates T-cell-mediated immune response by inhibiting T-cell activation, proliferation, cytokine production and development of cytotoxicity. When expressed on the cell surface of tumor macrophages, plays an important role, together with regulatory T-cells (Treg), in the suppression of tumor-associated antigen-specific T-cell immunity. Involved in promoting epithelial cell transformation. This is V-set domain containing T-cell activation inhibitor 1 from Mus musculus (Mouse).